Here is a 346-residue protein sequence, read N- to C-terminus: Probable RNA methyltransferase Pmen_2155 (346 aa).

Glu-91 acts as the Proton acceptor in catalysis. The Radical SAM core domain maps to 94–320; it reads LLPRDGLCIS…TKVRNSAGQD (227 aa). An intrachain disulfide couples Cys-101 to Cys-325. 3 residues coordinate [4Fe-4S] cluster: Cys-108, Cys-112, and Cys-115. Residues 153–154, Ser-183, 206–208, and Asn-282 contribute to the S-adenosyl-L-methionine site; these read GE and SLH. Cys-325 acts as the S-methylcysteine intermediate in catalysis.

It belongs to the radical SAM superfamily. RlmN family. [4Fe-4S] cluster is required as a cofactor.

The protein resides in the cytoplasm. This Ectopseudomonas mendocina (strain ymp) (Pseudomonas mendocina) protein is Probable RNA methyltransferase Pmen_2155.